The sequence spans 463 residues: uncharacterized protein (463 aa).

Residues 9–67 (VLKKGQRFPLTIKRLGINGEGVGYFKRHVVFVPGALPGEEVVVEVTDVKPRFAEASIRK) enclose the TRAM domain. Cys-80, Cys-86, Cys-89, and Cys-169 together coordinate [4Fe-4S] cluster. Gln-293, Tyr-322, Asp-343, and Asp-391 together coordinate S-adenosyl-L-methionine. Catalysis depends on Cys-418, which acts as the Nucleophile.

The protein belongs to the class I-like SAM-binding methyltransferase superfamily. RNA M5U methyltransferase family.

This is an uncharacterized protein from Halalkalibacterium halodurans (strain ATCC BAA-125 / DSM 18197 / FERM 7344 / JCM 9153 / C-125) (Bacillus halodurans).